The following is a 329-amino-acid chain: Transposable element Tc3 transposase (329 aa).

Residues Pro-2 to Thr-135 mediate DNA binding.

It belongs to the transposase 5 family. As to quaternary structure, homodimer or homotetramer.

The protein localises to the nucleus. Its function is as follows. Binds specifically to the terminal nucleotides of the TC3 inverted repeat. Its expression results in frequent excision and transposition of endogenous TC3 elements. TC3 transposase acts by making double strand breaks at the ends of TC3 element. The excised element would then be inserted into a target sequence. This is Transposable element Tc3 transposase (tc3a) from Caenorhabditis elegans.